The chain runs to 726 residues: Sensory/regulatory protein RpfC (726 aa).

At 1-22 (MKSPLPWLKRRLSGRADSEHAQ) the chain is on the periplasmic side. The interval 1-22 (MKSPLPWLKRRLSGRADSEHAQ) is sensor. A helical transmembrane segment spans residues 23 to 40 (NLIRIIITTLFISYLGWR). Over 41–51 (YQHTHGDTLMA) the chain is Cytoplasmic. The helical transmembrane segment at 52–72 (TWLILVGELLVSLGLMVAILL) threads the bilayer. Residues 73–94 (RPQVSHTRRLIGMLLDYTCTGA) lie on the Periplasmic side of the membrane. The helical transmembrane segment at 95–115 (IMAIQGEPASPLYAVCMWVTI) threads the bilayer. The Cytoplasmic segment spans residues 116 to 127 (GNGLRYGSNYLR). The helical transmembrane segment at 128-148 (AATAMGSLCFLGAILISPYWK) threads the bilayer. Over 149–151 (ANP) the chain is Periplasmic. Residues 152 to 172 (YLSWGLLLGLIAVPLYFDSLL) form a helical membrane-spanning segment. Topologically, residues 173 to 726 (RAMTRAVREA…DGECSPRSNE (554 aa)) are cytoplasmic. One can recognise a Histidine kinase domain in the interval 195 to 417 (NMSHEFRTPL…VFWFELPMAI (223 aa)). Residue His-198 is modified to Phosphohistidine; by autocatalysis. A Response regulatory domain is found at 463 to 581 (RMLVADDHEA…KLLDTLADLA (119 aa)). Asp-512 carries the 4-aspartylphosphate modification. In terms of domain architecture, HPt spans 618–711 (GEEFERQFVR…KAGKDALDAR (94 aa)). Position 657 is a phosphohistidine (His-657).

As to quaternary structure, at low DSF concentrations, interacts with RpfF. Autophosphorylated. Activation may require a sequential transfer of a phosphate group from a His in the primary transmitter domain, to an Asp in the receiver domain and to a His in the secondary transmitter domain.

The protein resides in the cell inner membrane. The catalysed reaction is ATP + protein L-histidine = ADP + protein N-phospho-L-histidine.. Binding of DSF to the sensor region causes allosteric change, which facilitates RpfC autophosphorylation. Its function is as follows. Hybrid sensor kinase that regulates diverse biological functions through two distinct molecular mechanisms. At low cell density, the extracellular concentration of the diffusible signaling factor (DSF) is below a threshold, and unphosphorylated RpfC is involved in the negative regulation of DSF synthesis, via direct interaction with the DSF synthase RpfF. Interaction prevents synthesis of DSF, which remains at a basal level. This activity does not involve the phosphorelay mechanism and is not dependent on RpfG. Is also member of the two-component regulatory system RpfG/RpfC, which is involved in the perception and response to DSF, which is essential for cell-cell signaling. At high cell density, the level of extracellular DSF increases and binding of DSF to the sensor region of RpfC causes autophosphorylation of RpfC, which results in the release of RpfF and the activation of RpfG via a four-step phosphorelay. Activation of RpfG leads to the positive regulation of biofilm dispersal and the production of virulence factors. The sequence is that of Sensory/regulatory protein RpfC (rpfC) from Xanthomonas campestris pv. campestris (strain 8004).